The primary structure comprises 396 residues: Serine/threonine-protein kinase GRIK1 (396 aa).

The disordered stretch occupies residues Glu-22–Ser-65. The segment covering Gly-48–Glu-60 has biased composition (acidic residues). The Protein kinase domain maps to Phe-108–Ile-369. ATP-binding positions include Ile-114–Val-122 and Lys-137. Thr-154 is subject to Phosphothreonine; by autocatalysis. The active-site Proton acceptor is Asp-239. Ser-261 is modified (phosphoserine; by KIN10).

It belongs to the protein kinase superfamily. Ser/Thr protein kinase family. As to quaternary structure, associates with the SNF1-related protein kinase (SnRK) complex. Interacts with AL1, a geminivirus (TGMV) protein essential for viral replication. In terms of tissue distribution, expressed in shoot apical meristem, leaf primordium and emerging petiole (at protein level).

The protein localises to the cytoplasm. It is found in the nucleus. The enzyme catalyses L-seryl-[protein] + ATP = O-phospho-L-seryl-[protein] + ADP + H(+). The catalysed reaction is L-threonyl-[protein] + ATP = O-phospho-L-threonyl-[protein] + ADP + H(+). With respect to regulation, activated when autophosphorylated at Thr-154 and inactivated when phosphorylated at Ser-261 by SnRK1.1/KIN10. In terms of biological role, activates SnRK1.1/KIN10 and SnRK1.2/KIN11 by phosphorylation of their activation-loop 'Thr-198' and 'Thr-176', respectively. Required for the regulation by SnRK1 kinases of the transcription of a large set of genes, the modification the activity of metabolic enzymes, and the control of various nutrient-responsive cellular developmental processes. This Arabidopsis thaliana (Mouse-ear cress) protein is Serine/threonine-protein kinase GRIK1 (GRIK1).